The primary structure comprises 444 residues: Serine--tRNA ligase (444 aa).

Residue 248 to 250 participates in L-serine binding; it reads TSE. Residue 279 to 281 coordinates ATP; sequence RSE. Glu-302 is an L-serine binding site. 366-369 contacts ATP; it reads EISS. Residue Ser-401 coordinates L-serine.

It belongs to the class-II aminoacyl-tRNA synthetase family. Type-1 seryl-tRNA synthetase subfamily. Homodimer. The tRNA molecule binds across the dimer.

It localises to the cytoplasm. It carries out the reaction tRNA(Ser) + L-serine + ATP = L-seryl-tRNA(Ser) + AMP + diphosphate + H(+). The enzyme catalyses tRNA(Sec) + L-serine + ATP = L-seryl-tRNA(Sec) + AMP + diphosphate + H(+). Its pathway is aminoacyl-tRNA biosynthesis; selenocysteinyl-tRNA(Sec) biosynthesis; L-seryl-tRNA(Sec) from L-serine and tRNA(Sec): step 1/1. Functionally, catalyzes the attachment of serine to tRNA(Ser). Is also able to aminoacylate tRNA(Sec) with serine, to form the misacylated tRNA L-seryl-tRNA(Sec), which will be further converted into selenocysteinyl-tRNA(Sec). This is Serine--tRNA ligase from Polaromonas naphthalenivorans (strain CJ2).